We begin with the raw amino-acid sequence, 2435 residues long: Highly reducing polyketide synthase ATR6 (2435 aa).

A Ketosynthase family 3 (KS3) domain is found at 18–450 (AEPIAIVSAA…GSNAHVVLDN (433 aa)). Catalysis depends on for beta-ketoacyl synthase activity residues Cys-192, His-331, and His-371. Positions 586–883 (FVFTGQGAQW…EIGPSAALGG (298 aa)) are malonyl-CoA:ACP transacylase (MAT) domain. Ser-682 (for malonyltransferase activity) is an active-site residue. Residues 979 to 1125 (HDLLGGKVLG…GLVRLALNAS (147 aa)) are N-terminal hotdog fold. A dehydratase (DH) domain region spans residues 979 to 1291 (HDLLGGKVLG…LRGISMTSVG (313 aa)). A PKS/mFAS DH domain is found at 979 to 1296 (HDLLGGKVLG…MTSVGLQGNV (318 aa)). His-1011 (for beta-hydroxyacyl dehydratase activity) is an active-site residue. A C-terminal hotdog fold region spans residues 1141 to 1296 (QYPTPARFWY…MTSVGLQGNV (156 aa)). The tract at residues 1724–2037 (GILDTLHFAE…DHNRLRNVVI (314 aa)) is enoylreductase (ER) domain. The segment at 2062 to 2301 (PEQTYLLVGK…ITGIAVPQPG (240 aa)) is catalytic ketoreductase (KRc) domain. Residues 2353–2429 (VLLSSAVGVL…VLCQKIISRM (77 aa)) enclose the Carrier domain. Position 2389 is an O-(pantetheine 4'-phosphoryl)serine (Ser-2389).

It functions in the pathway mycotoxin biosynthesis. In terms of biological role, highly reducing polyketide synthase; part of the core atranone cluster (CAC) which products are predicted to catalyze most or all steps of mycotoxin atranone synthesis, starting from geranylgeranyl pyrophosphate (GGPP). The initial cyclization of GGPP to dolabellane is probably performed by the terpene cyclase ATR13. The Baeyer-Villiger oxidation near the end of the atranone synthesis, which converts atranones D and E to atranones F and G is predicted to be catalyzed by the monooxygenase ATR8. Of the CAC's other predicted gene products, the reducing PKS ATR6 might synthesize a polyketide chain. This polyketide is probably transferred onto the atranone backbone by the polyketide transferase ATR5. Other predicted CAC products include 4 oxygenases (ATR2, ATR3, ATR4, and ATR14), 3 short-chain reductases (ATR7, ATR9, and ATR10), and a methyltransferase (ATR12). These may all be involved in the various steps of atranone biosynthesis, although their specific roles must await experimental determination. The protein is Highly reducing polyketide synthase ATR6 of Stachybotrys chlorohalonatus (strain IBT 40285).